We begin with the raw amino-acid sequence, 322 residues long: MSKNLSIIGAGAWGSALAIALYDNFDTIYLHAHTQDEVKILKPKYSALYPNNIKITCDFSKLQNSKDILIVTPSYAFSEVLEKIKPLISSAHQIAWGTKGFDTTKRCFLYESFERIFPNRNGCVISGPSFAFEVATNKPTALVVASVDKNTRKHFAKLIQTTTIRAYTNADIIGVEIGGSIKNILAIAAGIAAGLGYGINTQAALITRGLAEMSRLGVSLGAKNSTFVGLSGLGDLVLTCSDDLSRNRRFGKELAFNHSIKSALYNIGSTVEGLNTLELILSIANKKQVEMPICEQVYQVTQGKITPTEVVNYLMSREQTNE.

Positions 13, 33, and 99 each coordinate NADPH. K99, G127, and S129 together coordinate sn-glycerol 3-phosphate. A131 contributes to the NADPH binding site. Sn-glycerol 3-phosphate is bound by residues K182, D235, S245, R246, and N247. The active-site Proton acceptor is K182. Residue R246 participates in NADPH binding. E272 is a binding site for NADPH.

Belongs to the NAD-dependent glycerol-3-phosphate dehydrogenase family.

The protein localises to the cytoplasm. It catalyses the reaction sn-glycerol 3-phosphate + NAD(+) = dihydroxyacetone phosphate + NADH + H(+). The enzyme catalyses sn-glycerol 3-phosphate + NADP(+) = dihydroxyacetone phosphate + NADPH + H(+). The protein operates within membrane lipid metabolism; glycerophospholipid metabolism. In terms of biological role, catalyzes the reduction of the glycolytic intermediate dihydroxyacetone phosphate (DHAP) to sn-glycerol 3-phosphate (G3P), the key precursor for phospholipid synthesis. This is Glycerol-3-phosphate dehydrogenase [NAD(P)+] from Ruthia magnifica subsp. Calyptogena magnifica.